Reading from the N-terminus, the 1117-residue chain is Endogenous retrovirus group K member 9 Pol protein (1117 aa).

Residue glycine 2 is the site of N-myristoyl glycine attachment. The region spanning 58–195 (KDWKRIGKEL…AGQVPVTLQP (138 aa)) is the Reverse transcriptase domain. A disordered region spans residues 165 to 264 (GKGPELVGPS…APPSRQGSEL (100 aa)). Over residues 232–247 (GMPPAPQGRAPYPQPP) the composition is skewed to pro residues. 2 CCHC-type zinc fingers span residues 544–561 (GKCY…NCPV) and 580–597 (DLCP…QCRS). Positions 598–629 (KFDKNGQPLSGNEQRGQPQAPQQTGAFPIQPF) are disordered. Over residues 604–622 (QPLSGNEQRGQPQAPQQTG) the composition is skewed to polar residues. Positions 800 to 875 (FEGLVDTGAD…IPLNLWGRDL (76 aa)) constitute a Peptidase A2 domain. Aspartate 805 is a catalytic residue. The G-patch domain maps to 890–936 (YSPTSQKIMTKRGYIPGKGLGKNEDGIKIPFEAKINQKREGIGYPFL).

It belongs to the beta type-B retroviral polymerase family. HERV class-II K(HML-2) pol subfamily. Post-translationally, myristoylation is essential for retroviral assembly. Alteration of the glycine residue leads to a block in the budding of particles and an accumulation of Gag inside the cell. In terms of processing, specific enzymatic cleavages may yield mature proteins.

The protein resides in the cell membrane. It carries out the reaction Processing at the authentic HIV-1 PR recognition site and release of the mature p17 matrix and the p24 capsid protein, as a result of the cleavage of the -SQNY-|-PIVQ- cleavage site.. The enzyme catalyses DNA(n) + a 2'-deoxyribonucleoside 5'-triphosphate = DNA(n+1) + diphosphate. The catalysed reaction is Endonucleolytic cleavage to 5'-phosphomonoester.. Functionally, the products of the Gag polyproteins of infectious retroviruses perform highly complex orchestrated tasks during the assembly, budding, maturation, and infection stages of the viral replication cycle. During viral assembly, the proteins form membrane associations and self-associations that ultimately result in budding of an immature virion from the infected cell. Gag precursors also function during viral assembly to selectively bind and package two plus strands of genomic RNA. Endogenous Gag proteins may have kept, lost or modified their original function during evolution. Its function is as follows. Early post-infection, the reverse transcriptase converts the viral RNA genome into double-stranded viral DNA. The RNase H domain of the reverse transcriptase performs two functions. It degrades the RNA template and specifically removes the RNA primer from the RNA/DNA hybrid. Following nuclear import, the integrase catalyzes the insertion of the linear, double-stranded viral DNA into the host cell chromosome. Endogenous Pol proteins may have kept, lost or modified their original function during evolution. This Homo sapiens (Human) protein is Endogenous retrovirus group K member 9 Pol protein (ERVK-9).